We begin with the raw amino-acid sequence, 242 residues long: MTKLFIPYIMGDKDLIENATLLSENGADIIEIGVPFSDPVADGPVIMEAGQQAIKQGITIDYIFEQLEKHGNQIKCQYVLMTYYNIICHYGEQAFFEKCRDTGVYGLIIPDLPFELSQRLKQQFSHYGVKIISLVAMTTDDKRIKEIVSHAEGFIYTVTMNATTGQNGAFHPELKRKIESIKAIANVPVVAGFGIRTPQHVADIKEVADGIVIGSEIVKRFKSNTREEIIKYLQSIQQTLNN.

Active-site proton acceptor residues include E31 and D42.

This sequence belongs to the TrpA family. As to quaternary structure, tetramer of two alpha and two beta chains.

It catalyses the reaction (1S,2R)-1-C-(indol-3-yl)glycerol 3-phosphate + L-serine = D-glyceraldehyde 3-phosphate + L-tryptophan + H2O. It functions in the pathway amino-acid biosynthesis; L-tryptophan biosynthesis; L-tryptophan from chorismate: step 5/5. Its function is as follows. The alpha subunit is responsible for the aldol cleavage of indoleglycerol phosphate to indole and glyceraldehyde 3-phosphate. The sequence is that of Tryptophan synthase alpha chain from Staphylococcus aureus (strain bovine RF122 / ET3-1).